A 622-amino-acid polypeptide reads, in one-letter code: Gamma tubulin complex adapter SPC72 (622 aa).

Disordered stretches follow at residues 1–58 and 221–263; these read MVRR…PALM and DKEE…IHDS. The segment covering 228–238 has biased composition (polar residues); sequence LAQSSPAGSQL. Over residues 239–250 the composition is skewed to basic and acidic residues; sequence ESRDSPSSKEEN.

In terms of assembly, homooligomer. Interacts with CDC5, KAR1, KIN4, SPC97, SPC98, STU2 and TUB4. Phosphorylated by CDC5.

Its subcellular location is the cytoplasm. It is found in the cytoskeleton. It localises to the microtubule organizing center. The protein resides in the spindle pole body. Functionally, spindle pole body (SPB) component that acts as the gamma-tubulin complex-binding protein of the SPB outer plaque. Anchors cytoplasmic microtubules at the half bridge of the spindle pole body (SPB) and accordingly functions in nuclear position and spindle orientation, including anaphase spindle migration into the bud. Recruits KIN4 kinase to both SPBs when cytoplasmic microtubules are defective, to delay mitotic exit. Links cytoplasmic microtubules with spindle orientation checkpoint (SPOC) components and, therefore, could function as part of the sensors of spindle orientation defects. Required for cytoplasmic astral microtubule growth during mitosis. Is strictly required for mating and karyogamy. The sequence is that of Gamma tubulin complex adapter SPC72 (SPC72) from Saccharomyces cerevisiae (strain ATCC 204508 / S288c) (Baker's yeast).